We begin with the raw amino-acid sequence, 531 residues long: T-complex protein 1 subunit zeta (531 aa).

An N-acetylalanine modification is found at Ala2. The residue at position 5 (Lys5) is an N6-acetyllysine. Position 39 (Gly39) interacts with ADP. Position 39 (Gly39) interacts with ATP. Asp90 lines the Mg(2+) pocket. 6 residues coordinate ADP: Gly91, Thr92, Thr93, Ser94, Thr158, and Lys159. ATP-binding residues include Gly91, Thr92, and Thr93. At Lys199 the chain carries N6-acetyllysine. Ser205 bears the Phosphoserine mark. Residue Lys251 forms a Glycyl lysine isopeptide (Lys-Gly) (interchain with G-Cter in SUMO2) linkage. N6-acetyllysine is present on residues Lys287, Lys365, Lys377, and Lys388. ADP is bound at residue Ala411. Residues Ala411, Gly412, Asp496, and Lys501 each contribute to the ATP site. Asp496 is an ADP binding site.

Belongs to the TCP-1 chaperonin family. In terms of assembly, component of the chaperonin-containing T-complex (TRiC), a hexadecamer composed of two identical back-to-back stacked rings enclosing a protein folding chamber. Each ring is made up of eight different subunits: TCP1/CCT1, CCT2, CCT3, CCT4, CCT5, CCT6A/CCT6, CCT7, CCT8. Interacts with PACRG.

Its subcellular location is the cytoplasm. It carries out the reaction ATP + H2O = ADP + phosphate + H(+). Functionally, component of the chaperonin-containing T-complex (TRiC), a molecular chaperone complex that assists the folding of actin, tubulin and other proteins upon ATP hydrolysis. The TRiC complex mediates the folding of WRAP53/TCAB1, thereby regulating telomere maintenance. This chain is T-complex protein 1 subunit zeta (CCT6), found in Oryctolagus cuniculus (Rabbit).